The chain runs to 69 residues: Large ribosomal subunit protein uL29 (69 aa).

This sequence belongs to the universal ribosomal protein uL29 family.

The protein is Large ribosomal subunit protein uL29 of Mycoplasmopsis agalactiae (strain NCTC 10123 / CIP 59.7 / PG2) (Mycoplasma agalactiae).